The chain runs to 334 residues: Probable type II restriction enzyme HindVP (334 aa).

The catalysed reaction is Endonucleolytic cleavage of DNA to give specific double-stranded fragments with terminal 5'-phosphates.. In terms of biological role, a P subtype restriction enzyme that recognizes the double-stranded sequence 5'-GRCGYC-3'; the cleavage site is unknown. The chain is Probable type II restriction enzyme HindVP (hindVRP) from Haemophilus influenzae (strain ATCC 51907 / DSM 11121 / KW20 / Rd).